Here is a 200-residue protein sequence, read N- to C-terminus: ADP-ribosylation factor-like protein 4A (200 aa).

Residue glycine 2 is the site of N-myristoyl glycine attachment. Residues glycine 27 to threonine 34, aspartate 75 to glutamine 79, and asparagine 134 to aspartate 137 each bind GTP.

This sequence belongs to the small GTPase superfamily. Arf family. In terms of assembly, interacts with CYTH2. Interacts with KPNA2; the interaction is direct. Does not interact with ARL4A. Myristoylated. In terms of tissue distribution, expressed strongly in testis and liver. Expressed slightly in heart, spleen, lung and kidney.

It is found in the cell membrane. Its subcellular location is the cytoplasm. It localises to the nucleus. The protein localises to the nucleolus. Its function is as follows. Small GTP-binding protein which cycles between an inactive GDP-bound and an active GTP-bound form, and the rate of cycling is regulated by guanine nucleotide exchange factors (GEF) and GTPase-activating proteins (GAP). GTP-binding protein that does not act as an allosteric activator of the cholera toxin catalytic subunit. Recruits CYTH1, CYTH2, CYTH3 and CYTH4 to the plasma membrane in GDP-bound form. This is ADP-ribosylation factor-like protein 4A (Arl4a) from Mus musculus (Mouse).